We begin with the raw amino-acid sequence, 331 residues long: Flotillin-like protein FloA (331 aa).

2 consecutive transmembrane segments (helical) span residues 6 to 26 and 28 to 48; these read LMIL…FTFV and VMLW…TLVG. Residues 236 to 331 form a required for correct localization region; it reads QTDQAEADKN…KDPSDEDRKS (96 aa). 4 consecutive short sequence motifs (EA repeat) follow at residues 240–242, 251–253, 278–282, and 288–290; these read AEA, AEE, and EAEAE. A disordered region spans residues 312–331; sequence EMRDSFGKLTKDPSDEDRKS.

This sequence belongs to the flotillin-like FloA family. In terms of assembly, homooligomerizes. Interacts with FloT. Interacts with FtsH midcell. Interacts with PhoR, colocalizes with PhoR in FloA-only membrane rafts.

It is found in the cell membrane. Its subcellular location is the membrane raft. Found in functional membrane microdomains (FMM) that may be equivalent to eukaryotic membrane rafts. FMMs are highly dynamic and increase in number as cells age. FloA and FloT function is partially redundant; double deletions have marked synthetic phenotypes. Flotillins are thought to be important factors in membrane fluidity, especially during periods of rapid growth in rich media. Whether specific proteins are associated with FMMs is controversial; in one study FloT rafts have been shown to include proteins involved in adaptation to stationary phase, while FloA-FloT rafts include proteins involved in differentiation including sporulation, biofilm formation and DNA uptake competence. Another (more finely resolved) study only showed association of NfeD2 with FloT rafts of all the proteins examined. Involved in spatial organization of membranes, perhaps recruiting proteins to specific membrane regions. Simultaneous overexpression of both FloA and FloT leads to defects in cell division and differentiation, in part caused by stabilization of FtsH and its subsequent increased ability to degrade proteins. Cells make more biofilm, are about half as long, have less EzrA and more frequent Z-rings. The polypeptide is Flotillin-like protein FloA (Bacillus subtilis (strain 168)).